We begin with the raw amino-acid sequence, 971 residues long: Translation initiation factor IF-2 (971 aa).

The span at 49-63 shows a compositional bias: basic and acidic residues; that stretch reads HLRKSHGATDGDKRK. Disordered stretches follow at residues 49-85 and 99-386; these read HLRKSHGATDGDKRKITLTRKHTSEIKQSDATGKART and RDDV…PTEP. The segment covering 105–114 has biased composition (low complexity); it reads GAEQGQAQVA. A compositionally biased stretch (basic and acidic residues) spans 121–181; the sequence is ELKRREEEAR…EEEAAAKRAA (61 aa). Over residues 182-200 the composition is skewed to low complexity; the sequence is AEAAAAQQAAAQQAAAEQE. Residues 209–260 show a composition bias toward basic and acidic residues; it reads DEARAAAERAAQREAAKKAEDAAREAADKARAEQEEISKRRAAAEAEARAIR. The segment covering 303–325 has biased composition (low complexity); sequence ARPAVKKPAGAAAPATTQAPAGA. Over residues 355-368 the composition is skewed to gly residues; the sequence is SSGGVDRGWRGGPK. The 170-residue stretch at 471–640 folds into the tr-type G domain; the sequence is PRPPVVTVMG…LLQAEVLELK (170 aa). The interval 480 to 487 is G1; the sequence is GHVDHGKT. Residue 480–487 coordinates GTP; that stretch reads GHVDHGKT. Residues 505-509 are G2; sequence GITQH. Residues 526–529 are G3; the sequence is DTPG. GTP-binding positions include 526–530 and 580–583; these read DTPGH and NKID. Residues 580–583 form a G4 region; it reads NKID. The G5 stretch occupies residues 616-618; sequence SAK.

This sequence belongs to the TRAFAC class translation factor GTPase superfamily. Classic translation factor GTPase family. IF-2 subfamily.

The protein resides in the cytoplasm. Its function is as follows. One of the essential components for the initiation of protein synthesis. Protects formylmethionyl-tRNA from spontaneous hydrolysis and promotes its binding to the 30S ribosomal subunits. Also involved in the hydrolysis of GTP during the formation of the 70S ribosomal complex. In Burkholderia cenocepacia (strain ATCC BAA-245 / DSM 16553 / LMG 16656 / NCTC 13227 / J2315 / CF5610) (Burkholderia cepacia (strain J2315)), this protein is Translation initiation factor IF-2.